The primary structure comprises 228 residues: Ribulose-phosphate 3-epimerase (228 aa).

Ser-9 provides a ligand contact to substrate. Positions 34, 36, 68, and 177 each coordinate a divalent metal cation. Residue Asp-36 is the Proton acceptor of the active site. Substrate is bound by residues His-68, 177 to 179 (DGG), and 199 to 200 (GS). The active-site Proton donor is the Asp-177.

This sequence belongs to the ribulose-phosphate 3-epimerase family. A divalent metal cation is required as a cofactor.

The catalysed reaction is D-ribulose 5-phosphate = D-xylulose 5-phosphate. The protein operates within carbohydrate degradation. Functionally, catalyzes the reversible epimerization of D-ribulose 5-phosphate to D-xylulose 5-phosphate. The chain is Ribulose-phosphate 3-epimerase from Buchnera aphidicola subsp. Schizaphis graminum (strain Sg).